The following is a 445-amino-acid chain: Ribosomal protein uS12 methylthiotransferase RimO (445 aa).

The region spanning 4–119 is the MTTase N-terminal domain; that stretch reads IKVALVSLGC…LLESIKVFLK (116 aa). [4Fe-4S] cluster-binding residues include Cys13, Cys48, Cys82, Cys156, Cys160, and Cys163. One can recognise a Radical SAM core domain in the interval 142 to 372; that stretch reads TTPTYTAYVR…MILQQSISKD (231 aa). One can recognise a TRAM domain in the interval 375–441; it reads KEKIGKIYEV…EYDLIGVVYN (67 aa).

The protein belongs to the methylthiotransferase family. RimO subfamily. Requires [4Fe-4S] cluster as cofactor.

Its subcellular location is the cytoplasm. The enzyme catalyses L-aspartate(89)-[ribosomal protein uS12]-hydrogen + (sulfur carrier)-SH + AH2 + 2 S-adenosyl-L-methionine = 3-methylsulfanyl-L-aspartate(89)-[ribosomal protein uS12]-hydrogen + (sulfur carrier)-H + 5'-deoxyadenosine + L-methionine + A + S-adenosyl-L-homocysteine + 2 H(+). Functionally, catalyzes the methylthiolation of an aspartic acid residue of ribosomal protein uS12. The sequence is that of Ribosomal protein uS12 methylthiotransferase RimO from Clostridium botulinum (strain Langeland / NCTC 10281 / Type F).